A 288-amino-acid polypeptide reads, in one-letter code: tRNA dimethylallyltransferase (288 aa).

Residue 2–9 coordinates ATP; sequence GPTAAGKS. 4–9 serves as a coordination point for substrate; that stretch reads TAAGKS. The segment at 27–30 is interaction with substrate tRNA; it reads DSMQ.

This sequence belongs to the IPP transferase family. As to quaternary structure, monomer. The cofactor is Mg(2+).

It catalyses the reaction adenosine(37) in tRNA + dimethylallyl diphosphate = N(6)-dimethylallyladenosine(37) in tRNA + diphosphate. Functionally, catalyzes the transfer of a dimethylallyl group onto the adenine at position 37 in tRNAs that read codons beginning with uridine, leading to the formation of N6-(dimethylallyl)adenosine (i(6)A). The protein is tRNA dimethylallyltransferase of Frankia alni (strain DSM 45986 / CECT 9034 / ACN14a).